Reading from the N-terminus, the 148-residue chain is Probable TtuB-protein conjugate cleaving protease (148 aa).

One can recognise an MPN domain in the interval His-22–Leu-148. Glu-47 functions as the Proton donor/acceptor in the catalytic mechanism. Zn(2+) contacts are provided by His-101, His-103, and Asp-114. A JAMM motif motif is present at residues His-101 to Asp-114.

The protein belongs to the peptidase M67B family. Zn(2+) is required as a cofactor.

Probable metalloprotease that cleaves the ubiquitin-like modifier protein TtuB from protein conjugates, hydrolyzing the isopeptide bond between a lysine residue of the target protein and the C-terminal glycine of the modifier protein. Does not seem to work for all the TtuB conjugates. The polypeptide is Probable TtuB-protein conjugate cleaving protease (Thermus thermophilus (strain ATCC BAA-163 / DSM 7039 / HB27)).